The following is a 384-amino-acid chain: Putative glutamate--cysteine ligase 2 (384 aa).

The protein belongs to the glutamate--cysteine ligase type 2 family. YbdK subfamily.

It carries out the reaction L-cysteine + L-glutamate + ATP = gamma-L-glutamyl-L-cysteine + ADP + phosphate + H(+). In terms of biological role, ATP-dependent carboxylate-amine ligase which exhibits weak glutamate--cysteine ligase activity. The chain is Putative glutamate--cysteine ligase 2 from Ruegeria pomeroyi (strain ATCC 700808 / DSM 15171 / DSS-3) (Silicibacter pomeroyi).